Reading from the N-terminus, the 732-residue chain is Myosin heavy chain kinase B (732 aa).

An Alpha-type protein kinase domain is found at 124 to 328 (DPYTTTAQWT…ICQYLNLQSI (205 aa)). 298–303 (GIGNLG) lines the ATP pocket. Residues 331–428 (KSEKSDCGTV…TNKERSKSKS (98 aa)) form a disordered region. Positions 356 to 394 (NNNNNNNNNNNNNNNNNNSNNNNNNNSSISKSLVEISSG) are enriched in low complexity. Basic and acidic residues predominate over residues 395–404 (SKERNDRDSP). The segment covering 405-419 (SRQLFVSNDGNTLNT) has biased composition (polar residues). 7 WD repeats span residues 458-486 (KGYH…RVYD), 500-528 (GHEG…KVWD), 540-568 (GHDK…KVWD), 580-608 (SHAR…KVWD), 620-648 (GHTK…RVWN), 660-688 (GHDR…KIWD), and 700-730 (GHNA…RVWG).

Belongs to the protein kinase superfamily. Alpha-type protein kinase family. ALPK subfamily.

The enzyme catalyses L-threonyl-[myosin heavy-chain] + ATP = O-phospho-L-threonyl-[myosin heavy-chain] + ADP + H(+). Catalyzes its autophosphorylation, which is needed for enzymatic activity and phosphorylates myosin II heavy chain at a threonine in the C-terminal tail region. This phosphorylation is critical in regulating the assembly and disassembly of myosin II filament. Participates in control of myosin localization. This Dictyostelium discoideum (Social amoeba) protein is Myosin heavy chain kinase B (mhkB).